The primary structure comprises 2176 residues: Nonribosomal peptide synthetase sirP (2176 aa).

Over residues 16 to 31 (EGLTGDDHSPESRRDF) the composition is skewed to basic and acidic residues. The tract at residues 16 to 38 (EGLTGDDHSPESRRDFPMSQSSG) is disordered. Residues 51 to 434 (FERIASQFPE…LGRKDRVVKN (384 aa)) are adenylation 1. The Carrier 1 domain maps to 534-610 (SSPSSNLYVV…RICDTLSATI (77 aa)). Serine 571 carries the O-(pantetheine 4'-phosphoryl)serine modification. The interval 643–1073 (YMTAIQVNMI…MMNQLEINDL (431 aa)) is condensation 1. The interval 1094–1474 (FEEVVDTWPD…GRIDNQVKVR (381 aa)) is adenylation 2. Positions 1570-1646 (PIEGTTERII…DLALAIDKHI (77 aa)) constitute a Carrier 2 domain. Serine 1606 bears the O-(pantetheine 4'-phosphoryl)serine mark. Residues 1661–2070 (QNTVLSHLEE…VQLMAAFRYL (410 aa)) are condensation 2. One can recognise a Carrier 3 domain in the interval 2106–2176 (QEMIDLVREA…TAELIAGAVE (71 aa)). At serine 2140 the chain carries O-(pantetheine 4'-phosphoryl)serine.

Belongs to the NRP synthetase family.

It functions in the pathway mycotoxin biosynthesis. Functionally, nonribosomal peptide synthetase; part of the gene cluster that mediates the biosynthesis of sirodesmin PL, an epipolythiodioxopiperazine (ETP) characterized by a disulfide bridged cyclic dipeptide and that acts as a phytotoxin which is involved in the blackleg didease of canola. SirD catalyzes the O-prenylation of L-tyrosine (L-Tyr) in the presence of dimethylallyl diphosphate (DMAPP) to yield 4-O-dimethylallyl-L-Tyr, and therefore represents probably the first pathway-specific enzyme in the biosynthesis of sirodesmin PL. 4-O-dimethylallyl-L-Tyr, then undergoes condensation with L-Ser in a reaction catalyzed by the non-ribosomal peptide synthase sirP to form the diketopiperazine (DKP) backbone. Further bishydroxylation of the DKP performed by the cytochrome P450 monooxygenase sirC leads to the production of the intermediate phomamide. This step is essential to form the reactive thiol group required for toxicity of sirodesmin PL. The next steps of sirodesmin biosynthesis are not well understood yet, but some predictions could be made from intermediate compounds identification. Phomamide is converted into phomalizarine via oxidation, probably by sirT. Further oxidation, methylation (by sirM or sirN) and reduction steps convert phomalizarine to deacetyl sirodesmin. Finally, acetyltransferase sirH probably acetylates deacetyl sirodesmin to produce sirodesmin PL. This chain is Nonribosomal peptide synthetase sirP, found in Leptosphaeria maculans (Blackleg fungus).